The chain runs to 393 residues: NAD(P)H-quinone oxidoreductase subunit H, chloroplastic (393 aa).

Belongs to the complex I 49 kDa subunit family. In terms of assembly, NDH is composed of at least 16 different subunits, 5 of which are encoded in the nucleus.

The protein localises to the plastid. The protein resides in the chloroplast thylakoid membrane. The enzyme catalyses a plastoquinone + NADH + (n+1) H(+)(in) = a plastoquinol + NAD(+) + n H(+)(out). It carries out the reaction a plastoquinone + NADPH + (n+1) H(+)(in) = a plastoquinol + NADP(+) + n H(+)(out). Functionally, NDH shuttles electrons from NAD(P)H:plastoquinone, via FMN and iron-sulfur (Fe-S) centers, to quinones in the photosynthetic chain and possibly in a chloroplast respiratory chain. The immediate electron acceptor for the enzyme in this species is believed to be plastoquinone. Couples the redox reaction to proton translocation, and thus conserves the redox energy in a proton gradient. This chain is NAD(P)H-quinone oxidoreductase subunit H, chloroplastic, found in Agrostis stolonifera (Creeping bentgrass).